Reading from the N-terminus, the 434-residue chain is [Pyruvate dehydrogenase (acetyl-transferring)] kinase isozyme 1, mitochondrial (434 aa).

A mitochondrion-targeting transit peptide spans 1–26 (MRLARLLRGGTSVRPLCAVPCASRSL). Position 136 is a phosphotyrosine; by FGFR1 (Tyr136). The region spanning 161–391 (TEYKESFGVD…DAVIYIKALS (231 aa)) is the Histidine kinase domain. Tyr241 carries the phosphotyrosine; by FGFR1, ABL1, FLT3 and JAK2 modification. Tyr242 bears the Phosphotyrosine; by FGFR1 mark. ATP is bound by residues 277-284 (ELFKNAMR), Asp316, 335-336 (ST), and 352-357 (GFGYGL). Thr336 carries the phosphothreonine modification. N6-succinyllysine is present on Lys403.

The protein belongs to the PDK/BCKDK protein kinase family. Homodimer, and heterodimer with PDK2. Interacts with the pyruvate dehydrogenase complex subunit DLAT, and is part of the multimeric pyruvate dehydrogenase complex that contains multiple copies of pyruvate dehydrogenase (E1), dihydrolipoamide acetyltransferase (DLAT, E2) and lipoamide dehydrogenase (DLD, E3). Interacts with phosphoglycerate kinase PGK1; the interaction is direct, occurs under hypoxic conditions and leads to PDK1-mediated inhibition of pyruvate dehydrogenase complex activity. In terms of processing, phosphorylated by constitutively activated ABL1, FGFR1, FLT3 and JAK2 (in vitro), and this may also occur in cancer cells that express constitutively activated ABL1, FGFR1, FLT3 and JAK2. Phosphorylation at Tyr-241 and Tyr-242 strongly increases kinase activity, while phosphorylation at Tyr-136 has a lesser effect. Phosphorylated under hypoxic conditions at Thr-336 by phosphoglycerate kinase PGK1 which has an activating effect. As to expression, detected in pancreas islets (at protein level). Expressed predominantly in the heart.

It is found in the mitochondrion matrix. It catalyses the reaction L-seryl-[pyruvate dehydrogenase E1 alpha subunit] + ATP = O-phospho-L-seryl-[pyruvate dehydrogenase E1 alpha subunit] + ADP + H(+). Activated by binding to the pyruvate dehydrogenase complex subunit DLAT. Strongly activated by NADH plus acetyl-coenzyme A. Inhibited by dichloroacetate. In terms of biological role, kinase that plays a key role in regulation of glucose and fatty acid metabolism and homeostasis via phosphorylation of the pyruvate dehydrogenase subunits PDHA1 and PDHA2. This inhibits pyruvate dehydrogenase activity, and thereby regulates metabolite flux through the tricarboxylic acid cycle, down-regulates aerobic respiration and inhibits the formation of acetyl-coenzyme A from pyruvate. Plays an important role in cellular responses to hypoxia and is important for cell proliferation under hypoxia. The protein is [Pyruvate dehydrogenase (acetyl-transferring)] kinase isozyme 1, mitochondrial (Pdk1) of Rattus norvegicus (Rat).